Reading from the N-terminus, the 127-residue chain is Aspartate 1-decarboxylase (127 aa).

Catalysis depends on serine 25, which acts as the Schiff-base intermediate with substrate; via pyruvic acid. The residue at position 25 (serine 25) is a Pyruvic acid (Ser). Residue threonine 57 coordinates substrate. Tyrosine 58 (proton donor) is an active-site residue. 73–75 (GAA) is a binding site for substrate.

Belongs to the PanD family. As to quaternary structure, heterooctamer of four alpha and four beta subunits. Pyruvate is required as a cofactor. Post-translationally, is synthesized initially as an inactive proenzyme, which is activated by self-cleavage at a specific serine bond to produce a beta-subunit with a hydroxyl group at its C-terminus and an alpha-subunit with a pyruvoyl group at its N-terminus.

Its subcellular location is the cytoplasm. The catalysed reaction is L-aspartate + H(+) = beta-alanine + CO2. It participates in cofactor biosynthesis; (R)-pantothenate biosynthesis; beta-alanine from L-aspartate: step 1/1. Functionally, catalyzes the pyruvoyl-dependent decarboxylation of aspartate to produce beta-alanine. The chain is Aspartate 1-decarboxylase from Clostridium botulinum (strain 657 / Type Ba4).